The sequence spans 354 residues: Protein-glutamate methylesterase/protein-glutamine glutaminase 2 (354 aa).

The region spanning 5 to 122 (RVLIVDDSAL…SLKIKEVAEE (118 aa)) is the Response regulatory domain. Aspartate 56 is modified (4-aspartylphosphate). The region spanning 159–354 (PDTSFKKLIL…IADRIVELVR (196 aa)) is the CheB-type methylesterase domain. Catalysis depends on residues serine 172, histidine 199, and aspartate 298.

The protein belongs to the CheB family. Post-translationally, phosphorylated by CheA. Phosphorylation of the N-terminal regulatory domain activates the methylesterase activity.

The protein resides in the cytoplasm. It catalyses the reaction [protein]-L-glutamate 5-O-methyl ester + H2O = L-glutamyl-[protein] + methanol + H(+). The catalysed reaction is L-glutaminyl-[protein] + H2O = L-glutamyl-[protein] + NH4(+). In terms of biological role, involved in chemotaxis. Part of a chemotaxis signal transduction system that modulates chemotaxis in response to various stimuli. Catalyzes the demethylation of specific methylglutamate residues introduced into the chemoreceptors (methyl-accepting chemotaxis proteins or MCP) by CheR. Also mediates the irreversible deamidation of specific glutamine residues to glutamic acid. The protein is Protein-glutamate methylesterase/protein-glutamine glutaminase 2 of Carboxydothermus hydrogenoformans (strain ATCC BAA-161 / DSM 6008 / Z-2901).